Reading from the N-terminus, the 212-residue chain is Disintegrin-like halysetin (212 aa).

Residues 4–90 (PPVCGNELLE…ECPADVFHKN (87 aa)) form the Disintegrin domain. 9 disulfide bridges follow: Cys-7–Cys-26, Cys-18–Cys-36, Cys-62–Cys-82, Cys-69–Cys-94, Cys-101–Cys-106, Cys-113–Cys-128, Cys-151–Cys-158, Cys-163–Cys-174, and Cys-200–Cys-205. Positions 68–70 (ECD) match the D/ECD-tripeptide motif.

It belongs to the venom metalloproteinase (M12B) family. P-III subfamily. P-IIIb sub-subfamily. Monomer. As to expression, expressed by the venom gland.

The protein resides in the secreted. Functionally, inhibits human platelet aggregation stimulated by collagen with an IC(50) of 420 nM. The chain is Disintegrin-like halysetin from Gloydius halys (Chinese water mocassin).